A 145-amino-acid chain; its full sequence is Small ribosomal subunit protein uS9 (145 aa).

It belongs to the universal ribosomal protein uS9 family.

The protein resides in the cytoplasm. This Gossypium hirsutum (Upland cotton) protein is Small ribosomal subunit protein uS9 (RPS16).